The primary structure comprises 116 residues: uncharacterized protein (116 aa).

The interval 97–116 (AKGKGNEGREEAEEASGKSK) is disordered. Over residues 100–116 (KGNEGREEAEEASGKSK) the composition is skewed to basic and acidic residues.

Belongs to the UPF0440 family.

This is an uncharacterized protein from Pyrococcus horikoshii (strain ATCC 700860 / DSM 12428 / JCM 9974 / NBRC 100139 / OT-3).